Reading from the N-terminus, the 418-residue chain is MDVAAYMTELGQQARAASREVARSSTAVRNQALLATAAALDAARSELATANSKDLERGRENGLDSAMLDRLELTSQRIDAMIEGLRQVAALPDPVGVITDMTYRPSGIQVGKMRVPLGVIGIIYESRPNVTVEAASLCLKSGNATILRGGSEAIHSNQAIARCLKQGLSEAGLPETAVQVVSTTDRAAVGELITMPQFVDVIVPRGGKGLIERISRDARVPVIKHLDGVCHVYIDSHADPEKALKVAVNAKTQRYGTCNTMETLLVDDEVAEDLLPLLAEQFRSKTVELRGCRRTCAILGDIVEATEEDWHAEYLAPILAVKVVDGLDGAIEHINRYSSQHTDSIITENYTRARRFLTEVDSSSVMVNASTRFADGFEYGLGAEIGISTDKIHARGPVGLEGLTSQKYVVFGDGHIRT.

This sequence belongs to the gamma-glutamyl phosphate reductase family.

It is found in the cytoplasm. The enzyme catalyses L-glutamate 5-semialdehyde + phosphate + NADP(+) = L-glutamyl 5-phosphate + NADPH + H(+). It participates in amino-acid biosynthesis; L-proline biosynthesis; L-glutamate 5-semialdehyde from L-glutamate: step 2/2. In terms of biological role, catalyzes the NADPH-dependent reduction of L-glutamate 5-phosphate into L-glutamate 5-semialdehyde and phosphate. The product spontaneously undergoes cyclization to form 1-pyrroline-5-carboxylate. In Marinobacter nauticus (strain ATCC 700491 / DSM 11845 / VT8) (Marinobacter aquaeolei), this protein is Gamma-glutamyl phosphate reductase.